The chain runs to 914 residues: Exoglucanase-2 (914 aa).

The N-terminal stretch at 1–33 is a signal peptide; that stretch reads MKRRLMKGISLLTLVFLIGIMLQLSLKSELTAY. Positions 763-914 constitute a CBM3 domain; it reads VEGVLIIQSF…SGNLVYGIEP (152 aa).

It belongs to the glycosyl hydrolase 48 (cellulase L) family.

It catalyses the reaction Hydrolysis of (1-&gt;4)-beta-D-glucosidic linkages in cellulose and cellotetraose, releasing cellobiose from the non-reducing ends of the chains.. The protein is Exoglucanase-2 (celY) of Thermoclostridium stercorarium (strain ATCC 35414 / DSM 8532 / NCIMB 11754) (Clostridium stercorarium).